The primary structure comprises 180 residues: Ribulose bisphosphate carboxylase small subunit, chloroplastic 5 (180 aa).

Residues 1–56 constitute a chloroplast transit peptide; sequence MASSVMSSAAVATRGNGAQASMVAPFTGLKSTASFPVSRKQNLDITSIASNGGRVR.

This sequence belongs to the RuBisCO small chain family. In terms of assembly, heterohexadecamer of 8 large and 8 small subunits.

Its subcellular location is the plastid. The protein localises to the chloroplast. Functionally, ruBisCO catalyzes two reactions: the carboxylation of D-ribulose 1,5-bisphosphate, the primary event in carbon dioxide fixation, as well as the oxidative fragmentation of the pentose substrate. Both reactions occur simultaneously and in competition at the same active site. Although the small subunit is not catalytic it is essential for maximal activity. This Solanum tuberosum (Potato) protein is Ribulose bisphosphate carboxylase small subunit, chloroplastic 5.